Consider the following 359-residue polypeptide: Insulin gene enhancer protein ISL-2 (359 aa).

LIM zinc-binding domains are found at residues 25–86 (AMCV…RLFG) and 87–149 (IKCA…LLER). A disordered region spans residues 151-191 (AAGSPRSPGPLPGARGLHLPDAGSGRQPALRPHVHKQTEKT). Residues S154 and S157 each carry the phosphoserine modification. Positions 191-250 (TTRVRTVLNEKQLHTLRTCYAANPRPDALMKEQLVEMTGLSPRVIRVWFQNKRCKDKKKS) form a DNA-binding region, homeobox. Positions 272–301 (GTPLVAGSPIRHENAVQGSAVEVQTYQPPW) are LIM-binding domain (LID). Phosphoserine is present on S279. Over residues 326–336 (ESGSLGNSSGS) the composition is skewed to low complexity. Residues 326-359 (ESGSLGNSSGSDVTSLSSQLPDTPNSMVPSPVET) are disordered. Residues 337–359 (DVTSLSSQLPDTPNSMVPSPVET) show a composition bias toward polar residues.

In terms of assembly, interacts with LHX4.

The protein localises to the nucleus. Functionally, transcriptional factor that defines subclasses of motoneurons that segregate into columns in the spinal cord and select distinct axon pathways. This chain is Insulin gene enhancer protein ISL-2 (ISL2), found in Homo sapiens (Human).